Here is a 372-residue protein sequence, read N- to C-terminus: MPLPDFHVSEPFTLGIELEMQVVNPPGYDLSQDSSMLIDAVKNKITAGEVKHDITESMLELATDVCRDINQAAGQFSAMQKVVLQAAADHHLEICGGGTHPFQKWQRQEVCDNERYQRTLENFGYLIQQATVFGQHVHVGCASGDDAIYLLHGLSRFVPHFIALSAASPYMQGTDTRFASSRPNIFSAFPDNGPMPWVSNWQQFEALFRCLSYTTMIDSIKDLHWDIRPSPHFGTVEVRVMDTPLTLSHAVNMAGLIQATAHWLLTERPFKHKEKDYLLYKFNRFQACRYGLEGVITDPYTGDRRPLTEDTLRLLEKIAPSAHKIGASSAIEALHRQVVSGLNEAQLMRDFVADGGSLIGLVKKHCEIWAGD.

It belongs to the glutamate--cysteine ligase type 2 family. YbdK subfamily. In terms of assembly, homodimer.

The catalysed reaction is L-cysteine + L-glutamate + ATP = gamma-L-glutamyl-L-cysteine + ADP + phosphate + H(+). Its function is as follows. ATP-dependent carboxylate-amine ligase which exhibits weak glutamate--cysteine ligase activity. The sequence is that of Putative glutamate--cysteine ligase 2 (ybdK) from Escherichia coli O157:H7.